The sequence spans 244 residues: Ureidoacrylate amidohydrolase RutB (244 aa).

Asp38 serves as the catalytic Proton acceptor. The active site involves Lys147. Cys180 serves as the catalytic Nucleophile.

Belongs to the isochorismatase family. RutB subfamily.

It carries out the reaction (Z)-3-ureidoacrylate + H2O + H(+) = (Z)-3-aminoacrylate + NH4(+) + CO2. The enzyme catalyses (Z)-3-ureidoacrylate + H2O = (Z)-3-aminoacrylate + carbamate + H(+). It catalyses the reaction (Z)-2-methylureidoacrylate + H2O + H(+) = (Z)-2-methylaminoacrylate + NH4(+) + CO2. Functionally, hydrolyzes ureidoacrylate to form aminoacrylate and carbamate. The carbamate hydrolyzes spontaneously, thereby releasing one of the nitrogen atoms of the pyrimidine ring as ammonia and one of its carbon atoms as CO2. The polypeptide is Ureidoacrylate amidohydrolase RutB (Escherichia coli O6:H1 (strain CFT073 / ATCC 700928 / UPEC)).